Here is a 535-residue protein sequence, read N- to C-terminus: BAR/IMD domain-containing adapter protein 2 (535 aa).

One can recognise an IMD domain in the interval 1-250; that stretch reads MSLSRSEEMH…VQLMQQMANS (250 aa). Positions 88–153 form a coiled coil; that stretch reads NQLEETLKSF…LRKKSQGSKN (66 aa). Serine 262, serine 324, serine 326, and serine 337 each carry phosphoserine. Residues 299–370 form a disordered region; it reads VMNGVAGPDS…TLPRSSSMAA (72 aa). A compositionally biased stretch (low complexity) spans 321 to 335; sequence QPKSLSPPQSQSKLS. Threonine 341 is modified (phosphothreonine). Serine 347 carries the phosphoserine modification. Polar residues predominate over residues 349–368; it reads TPKNSYATTENKTLPRSSSM. The residue at position 361 (threonine 361) is a Phosphothreonine. 4 positions are modified to phosphoserine: serine 367, serine 385, serine 396, and serine 455. The SH3 domain maps to 375–438; the sequence is NGRMRVKAIF…PFSYTRVLDS (64 aa). Residues 445 to 477 form a disordered region; sequence HMSLQQGKSSSTGNLLDKDDLALPPPDYGTSSR. A compositionally biased stretch (polar residues) spans 447 to 458; the sequence is SLQQGKSSSTGN.

In terms of assembly, homodimer. Interacts with CDC42 and RAC1 that have been activated by GTP binding. Binds DIAPH1. Interacts with ATN1, ADGRB1, SHANK1, SHANK2, SHANK3, TIAM1, WASF1 and WASF2. Interacts with ENAH after recruitment of CDC42. Interacts with EPS8. Phosphorylated on tyrosine residues by INSR in response to insulin treatment. As to expression, detected in liver, brain, olfactory bulb, brain cortex, caudate putamen, hypothalamus and cerebellum.

It is found in the cytoplasm. The protein resides in the membrane. It localises to the cell projection. Its subcellular location is the filopodium. The protein localises to the ruffle. It is found in the cytoskeleton. Functionally, adapter protein that links membrane-bound small G-proteins to cytoplasmic effector proteins. Necessary for CDC42-mediated reorganization of the actin cytoskeleton and for RAC1-mediated membrane ruffling. Involved in the regulation of the actin cytoskeleton by WASF family members and the Arp2/3 complex. Plays a role in neurite growth. Acts syngeristically with ENAH to promote filipodia formation. Plays a role in the reorganization of the actin cytoskeleton in response to bacterial infection. Participates in actin bundling when associated with EPS8, promoting filopodial protrusions. In Mus musculus (Mouse), this protein is BAR/IMD domain-containing adapter protein 2 (Baiap2).